A 232-amino-acid chain; its full sequence is Ribose-5-phosphate isomerase A (232 aa).

Substrate is bound by residues 31 to 34 (TGST), 87 to 90 (DGAD), and 100 to 103 (KGGG). The active-site Proton acceptor is Glu109. Lys127 contributes to the substrate binding site.

Belongs to the ribose 5-phosphate isomerase family. Homodimer.

It catalyses the reaction aldehydo-D-ribose 5-phosphate = D-ribulose 5-phosphate. Its pathway is carbohydrate degradation; pentose phosphate pathway; D-ribose 5-phosphate from D-ribulose 5-phosphate (non-oxidative stage): step 1/1. In terms of biological role, catalyzes the reversible conversion of ribose-5-phosphate to ribulose 5-phosphate. The sequence is that of Ribose-5-phosphate isomerase A from Bifidobacterium adolescentis (strain ATCC 15703 / DSM 20083 / NCTC 11814 / E194a).